The following is a 935-amino-acid chain: Isoleucine--tRNA ligase (935 aa).

The 'HIGH' region signature appears at 58-68; that stretch reads PYANGSIHVGH. Residue glutamate 558 participates in L-isoleucyl-5'-AMP binding. The 'KMSKS' region motif lies at 599 to 603; that stretch reads KMSKS. An ATP-binding site is contributed by lysine 602. The Zn(2+) site is built by cysteine 897, cysteine 900, cysteine 917, and cysteine 920.

Belongs to the class-I aminoacyl-tRNA synthetase family. IleS type 1 subfamily. In terms of assembly, monomer. Zn(2+) serves as cofactor.

It localises to the cytoplasm. It carries out the reaction tRNA(Ile) + L-isoleucine + ATP = L-isoleucyl-tRNA(Ile) + AMP + diphosphate. Functionally, catalyzes the attachment of isoleucine to tRNA(Ile). As IleRS can inadvertently accommodate and process structurally similar amino acids such as valine, to avoid such errors it has two additional distinct tRNA(Ile)-dependent editing activities. One activity is designated as 'pretransfer' editing and involves the hydrolysis of activated Val-AMP. The other activity is designated 'posttransfer' editing and involves deacylation of mischarged Val-tRNA(Ile). This is Isoleucine--tRNA ligase from Francisella tularensis subsp. mediasiatica (strain FSC147).